The primary structure comprises 190 residues: Probable nicotinate-nucleotide adenylyltransferase (190 aa).

The protein belongs to the NadD family.

It carries out the reaction nicotinate beta-D-ribonucleotide + ATP + H(+) = deamido-NAD(+) + diphosphate. Its pathway is cofactor biosynthesis; NAD(+) biosynthesis; deamido-NAD(+) from nicotinate D-ribonucleotide: step 1/1. Catalyzes the reversible adenylation of nicotinate mononucleotide (NaMN) to nicotinic acid adenine dinucleotide (NaAD). The chain is Probable nicotinate-nucleotide adenylyltransferase from Borrelia turicatae (strain 91E135).